Reading from the N-terminus, the 397-residue chain is Tryptophan synthase beta chain (397 aa).

The residue at position 87 (Lys-87) is an N6-(pyridoxal phosphate)lysine.

It belongs to the TrpB family. As to quaternary structure, tetramer of two alpha and two beta chains. The cofactor is pyridoxal 5'-phosphate.

The catalysed reaction is (1S,2R)-1-C-(indol-3-yl)glycerol 3-phosphate + L-serine = D-glyceraldehyde 3-phosphate + L-tryptophan + H2O. It functions in the pathway amino-acid biosynthesis; L-tryptophan biosynthesis; L-tryptophan from chorismate: step 5/5. The beta subunit is responsible for the synthesis of L-tryptophan from indole and L-serine. The polypeptide is Tryptophan synthase beta chain (Citrobacter koseri (strain ATCC BAA-895 / CDC 4225-83 / SGSC4696)).